The sequence spans 548 residues: Probable inorganic phosphate transporter 1-5 (548 aa).

At 1 to 23 (MVQDRKVLDALDTAKTQWYHFTA) the chain is on the cytoplasmic side. Residues 24-44 (VVIAGMGFFTDAYDLFSISLV) traverse the membrane as a helical segment. At 45 to 69 (TKLLGRIYYFNPASKSPGSLPPNVS) the chain is on the extracellular side. Residues 70–90 (AAVNGVAFCGTLAGQLFFGWL) traverse the membrane as a helical segment. The Cytoplasmic portion of the chain corresponds to 91–98 (GDKMGRKK). The chain crosses the membrane as a helical span at residues 99-119 (VYGMTLMLMVICCLASGLSFG). Over 120–123 (SSAK) the chain is Extracellular. A helical membrane pass occupies residues 124 to 144 (GVMATLCFFRFWLGFGIGGDY). At 145 to 163 (PLSATIMSEYANKRTRGAF) the chain is on the cytoplasmic side. The helical transmembrane segment at 164–184 (IAAVFAMQGFGNLTGGIVAII) threads the bilayer. The Extracellular portion of the chain corresponds to 185 to 210 (VSAAFKLRFDAPAYRDDRAGSTVPQA). Residues 211–231 (DYAWRIVLMFGAIPALLTYYW) traverse the membrane as a helical segment. Topologically, residues 232 to 303 (RMKMPETARY…REFARRHGHH (72 aa)) are cytoplasmic. A helical membrane pass occupies residues 304–324 (LLGTTVCWFVLDIAYYSQNLF). Residues 325–355 (QKDIYTAVQWLPKADTMSALEEMFKISRAQT) lie on the Extracellular side of the membrane. A helical transmembrane segment spans residues 356–376 (LVALCGTIPGYWFTVLFIDIV). Over 377–378 (GR) the chain is Cytoplasmic. Residues 379-399 (FAIQLGGFFLMTAFMLGLAVP) traverse the membrane as a helical segment. The Extracellular portion of the chain corresponds to 400 to 405 (YHHWTT). The helical transmembrane segment at 406–426 (PGNHVGFVVMYAFTFFFANFG) threads the bilayer. The Cytoplasmic portion of the chain corresponds to 427 to 449 (PNSTTFIVPAEIFPARLRSTCHG). Residues 450–470 (ISSAAGKMGAIVGSFGFLYAA) form a helical membrane-spanning segment. Over 471-490 (QSTDPSKTDAGYPRGIGVRN) the chain is Extracellular. The helical transmembrane segment at 491–511 (SLFLLAGCNVVGFLFTFLVPE) threads the bilayer. At 512-548 (SKGKSLEELSGENEMEAEPAAATNSYRQTVPDSGQSE) the chain is on the cytoplasmic side. The segment at 518-548 (EELSGENEMEAEPAAATNSYRQTVPDSGQSE) is disordered. The span at 533 to 548 (ATNSYRQTVPDSGQSE) shows a compositional bias: polar residues.

The protein belongs to the major facilitator superfamily. Phosphate:H(+) symporter (TC 2.A.1.9) family. Expressed at low levels in roots.

It localises to the membrane. In terms of biological role, high-affinity transporter for external inorganic phosphate. The polypeptide is Probable inorganic phosphate transporter 1-5 (PHT1-5) (Oryza sativa subsp. japonica (Rice)).